We begin with the raw amino-acid sequence, 320 residues long: uncharacterized protein (320 aa).

R61 bears the Omega-N-methylarginine mark. The segment at 299–320 (LHLQHQKQTSKDAGRQTPERKA) is disordered. Residues 307-320 (TSKDAGRQTPERKA) are compositionally biased toward basic and acidic residues. Residue T315 is modified to Phosphothreonine.

This is an uncharacterized protein from Mus musculus (Mouse).